The chain runs to 427 residues: MSRSESLFAQAQKHIPGGVNSPVRAFKSVGGTPLFFKHAEGAYVVDEDDKRYVDYVGSWGPMILGHGHPQVLDAVRNQLQHGLSYGAPTAMETEMADLVCSLVPSMEMVRMVSSGTEATMSAIRLARGYTGRDAIIKFEGCYHGHSDSLLVKAGSGLLTQGVPSSAGVPADFAKHTLTLPFNDIAAVEKTLAEVGQTVACIIVEPVAGNMNCVPPAPGFLEGLREQCDKHGVVLIFDEVMTGFRVSLGGAQGYYGITPDLSTFGKIVGGGMPVGCFGGKREIMGCIAPLGPVYQAGTLSGNPLAMAAGLTTLKLISRPGFHDELSDFTSRMLDGLQQRADAAGVPFVTTQAGAMFGLYFSGADDIVTFDDVMASDAERFKRFFHLMLDGGVYLAPSAFEAGFTSIAHGDKELQITLDAAERAFAALK.

N6-(pyridoxal phosphate)lysine is present on Lys265.

Belongs to the class-III pyridoxal-phosphate-dependent aminotransferase family. HemL subfamily. As to quaternary structure, homodimer. Requires pyridoxal 5'-phosphate as cofactor.

The protein localises to the cytoplasm. The catalysed reaction is (S)-4-amino-5-oxopentanoate = 5-aminolevulinate. It participates in porphyrin-containing compound metabolism; protoporphyrin-IX biosynthesis; 5-aminolevulinate from L-glutamyl-tRNA(Glu): step 2/2. This chain is Glutamate-1-semialdehyde 2,1-aminomutase, found in Pseudomonas putida (strain W619).